The primary structure comprises 208 residues: Probable GTP-binding protein EngB (208 aa).

One can recognise an EngB-type G domain in the interval 18 to 187 (KQFEICVIGR…FALMKKVVIQ (170 aa)). GTP-binding positions include 26-33 (GRSNVGKS), 52-56 (GRTQL), 69-72 (DLPG), 135-138 (NKLD), and 166-168 (VSA). The Mg(2+) site is built by Ser-33 and Thr-54.

Belongs to the TRAFAC class TrmE-Era-EngA-EngB-Septin-like GTPase superfamily. EngB GTPase family. It depends on Mg(2+) as a cofactor.

Necessary for normal cell division and for the maintenance of normal septation. The chain is Probable GTP-binding protein EngB from Ureaplasma parvum serovar 3 (strain ATCC 27815 / 27 / NCTC 11736).